Here is a 354-residue protein sequence, read N- to C-terminus: tRNA N6-adenosine threonylcarbamoyltransferase (354 aa).

Fe cation is bound by residues His-111 and His-115. Substrate contacts are provided by residues Leu-134 to Gly-138, Asp-167, Gly-180, and Asn-279. Asp-319 is a binding site for Fe cation.

This sequence belongs to the KAE1 / TsaD family. Requires Fe(2+) as cofactor.

The protein localises to the cytoplasm. It carries out the reaction L-threonylcarbamoyladenylate + adenosine(37) in tRNA = N(6)-L-threonylcarbamoyladenosine(37) in tRNA + AMP + H(+). In terms of biological role, required for the formation of a threonylcarbamoyl group on adenosine at position 37 (t(6)A37) in tRNAs that read codons beginning with adenine. Is involved in the transfer of the threonylcarbamoyl moiety of threonylcarbamoyl-AMP (TC-AMP) to the N6 group of A37, together with TsaE and TsaB. TsaD likely plays a direct catalytic role in this reaction. The chain is tRNA N6-adenosine threonylcarbamoyltransferase from Neisseria meningitidis.